A 248-amino-acid polypeptide reads, in one-letter code: 3-deoxy-manno-octulosonate cytidylyltransferase (248 aa).

It belongs to the KdsB family.

Its subcellular location is the cytoplasm. The catalysed reaction is 3-deoxy-alpha-D-manno-oct-2-ulosonate + CTP = CMP-3-deoxy-beta-D-manno-octulosonate + diphosphate. Its pathway is nucleotide-sugar biosynthesis; CMP-3-deoxy-D-manno-octulosonate biosynthesis; CMP-3-deoxy-D-manno-octulosonate from 3-deoxy-D-manno-octulosonate and CTP: step 1/1. It participates in bacterial outer membrane biogenesis; lipopolysaccharide biosynthesis. In terms of biological role, activates KDO (a required 8-carbon sugar) for incorporation into bacterial lipopolysaccharide in Gram-negative bacteria. This chain is 3-deoxy-manno-octulosonate cytidylyltransferase, found in Salmonella dublin (strain CT_02021853).